Reading from the N-terminus, the 409-residue chain is Histidinol dehydrogenase homolog (409 aa).

Belongs to the histidinol dehydrogenase family.

This Synechocystis sp. (strain ATCC 27184 / PCC 6803 / Kazusa) protein is Histidinol dehydrogenase homolog.